We begin with the raw amino-acid sequence, 517 residues long: Probable bifunctional methylthioribulose-1-phosphate dehydratase/enolase-phosphatase E1 1 (517 aa).

The tract at residues 1–240 (MAAAALNGLK…AIKLYQLGLD (240 aa)) is methylthioribulose-1-phosphate dehydratase. Cys112 provides a ligand contact to substrate. Residues His130 and His132 each contribute to the Zn(2+) site. Glu155 serves as the catalytic Proton donor/acceptor; for methylthioribulose-1-phosphate dehydratase activity. His205 contributes to the Zn(2+) binding site. The enolase-phosphatase E1 stretch occupies residues 278-517 (IVLDIEGTTT…FKTITSFSDI (240 aa)). Residues Asp281 and Glu283 each coordinate Mg(2+). Substrate contacts are provided by residues 416–417 (SS) and Lys450. Residue Asp476 coordinates Mg(2+).

It in the N-terminal section; belongs to the aldolase class II family. MtnB subfamily. In the C-terminal section; belongs to the HAD-like hydrolase superfamily. MasA/MtnC family. Requires Zn(2+) as cofactor. The cofactor is Mg(2+).

It carries out the reaction 5-(methylsulfanyl)-D-ribulose 1-phosphate = 5-methylsulfanyl-2,3-dioxopentyl phosphate + H2O. The enzyme catalyses 5-methylsulfanyl-2,3-dioxopentyl phosphate + H2O = 1,2-dihydroxy-5-(methylsulfanyl)pent-1-en-3-one + phosphate. Its pathway is amino-acid biosynthesis; L-methionine biosynthesis via salvage pathway; L-methionine from S-methyl-5-thio-alpha-D-ribose 1-phosphate: step 2/6. The protein operates within amino-acid biosynthesis; L-methionine biosynthesis via salvage pathway; L-methionine from S-methyl-5-thio-alpha-D-ribose 1-phosphate: step 3/6. It participates in amino-acid biosynthesis; L-methionine biosynthesis via salvage pathway; L-methionine from S-methyl-5-thio-alpha-D-ribose 1-phosphate: step 4/6. The protein is Probable bifunctional methylthioribulose-1-phosphate dehydratase/enolase-phosphatase E1 1 of Vitis vinifera (Grape).